The primary structure comprises 212 residues: Thymidylate kinase (212 aa).

11–18 (GIEGSGKT) serves as a coordination point for ATP.

The protein belongs to the thymidylate kinase family.

It catalyses the reaction dTMP + ATP = dTDP + ADP. In terms of biological role, phosphorylation of dTMP to form dTDP in both de novo and salvage pathways of dTTP synthesis. The protein is Thymidylate kinase of Buchnera aphidicola subsp. Baizongia pistaciae (strain Bp).